We begin with the raw amino-acid sequence, 244 residues long: Ferredoxin--NADP reductase B (244 aa).

Residues 4-106 (AEPFEARLVA…VGPHGLFTRD (103 aa)) form the FAD-binding FR-type domain. Residues 55–58 (RAYS) and threonine 120 each bind FAD.

Belongs to the ferredoxin--NADP reductase type 1 family. Requires FAD as cofactor.

It catalyses the reaction 2 reduced [4Fe-4S]-[ferredoxin] + NADP(+) + H(+) = 2 oxidized [4Fe-4S]-[ferredoxin] + NADPH. Transports electrons between NADPH and ferredoxin. Can transfer electrons to ferredoxins Fdx2 and Fdx8. Prefers NADPH to NADH. The sequence is that of Ferredoxin--NADP reductase B from Sorangium cellulosum (strain So ce56) (Polyangium cellulosum (strain So ce56)).